We begin with the raw amino-acid sequence, 266 residues long: Decarboxylase tropJ (266 aa).

Residue E80 is the Proton acceptor of the active site. 4 residues coordinate Zn(2+): E80, H99, H101, and H180.

Belongs to the aldolase class II family. Zn(2+) serves as cofactor.

The protein operates within secondary metabolite biosynthesis. Its function is as follows. Decarboxylase; part of the gene cluster that mediates the biosynthesis of the tropolone class of fungal maleic anhydrides. The pathway begins with the synthesis of 3-methylorcinaldehyde by the non-reducing polyketide synthase (PKS) tropA. 3-methylorcinaldehyde is the substrate for the FAD-dependent monooxygenase tropB to yield a dearomatized hydroxycyclohexadione. The 2-oxoglutarate-dependent dioxygenase tropC then performs the oxidative ring expansion to provide the first tropolone metabolite stipitaldehyde. Trop D converts stipitaldehyde into stipitacetal which is in turn converted to stipitalide by the short-chain dehydrogenase/reductase tropE. The next steps involve tropF, tropG, tropH, tropI and tropJ to form successive tropolone maleic anhydrides including stipitaldehydic, stipitatonic and stipitatic acids. In Talaromyces stipitatus (strain ATCC 10500 / CBS 375.48 / QM 6759 / NRRL 1006) (Penicillium stipitatum), this protein is Decarboxylase tropJ.